Here is a 248-residue protein sequence, read N- to C-terminus: MRQAIFSNPNDAAEYLANYIIAKINSTPRTFVLGLPTGSSPEGIYAKLIEANKQGRVSFKNVVTFNMDEYLGLAPSDLQSYHYFMYDKFFNHIDIPRENIHILNGLAANIDEECANYEKKIKQYGRIDLFLGGLGPEGHLAFNEAGSSRNSKTRKVELVESTIKANCRFFGNDESKVPKYALSVGISTILDNSDEIAIIVLGKNKQFALDKTVNGKPNDPKYPSSYLQDHANVLIVCDNAAAGLKSKL.

Aspartate 68 (proton acceptor; for enolization step) is an active-site residue. The active-site For ring-opening step is the glutamate 137. Catalysis depends on histidine 139, which acts as the Proton acceptor; for ring-opening step. The active-site For ring-opening step is glutamate 144.

The protein belongs to the glucosamine/galactosamine-6-phosphate isomerase family. Monomer.

The catalysed reaction is alpha-D-glucosamine 6-phosphate + H2O = beta-D-fructose 6-phosphate + NH4(+). In Candida albicans (strain SC5314 / ATCC MYA-2876) (Yeast), this protein is Glucosamine-6-phosphate isomerase (NAG1).